The following is a 198-amino-acid chain: Heat shock 70 kDa protein (198 aa).

Residues 170-191 (GGGVPSGMPGGMPGAGGGGGKG) show a composition bias toward gly residues. Positions 170-198 (GGGVPSGMPGGMPGAGGGGGKGPTIEEVD) are disordered.

This sequence belongs to the heat shock protein 70 family.

In Schistosoma japonicum (Blood fluke), this protein is Heat shock 70 kDa protein.